A 619-amino-acid chain; its full sequence is Dihydroxy-acid dehydratase (619 aa).

Asp81 lines the Mg(2+) pocket. Cys122 lines the [2Fe-2S] cluster pocket. Mg(2+) contacts are provided by Asp123 and Lys124. The residue at position 124 (Lys124) is an N6-carboxylysine. Residue Cys198 participates in [2Fe-2S] cluster binding. Glu494 serves as a coordination point for Mg(2+). Catalysis depends on Ser520, which acts as the Proton acceptor.

Belongs to the IlvD/Edd family. Homodimer. [2Fe-2S] cluster serves as cofactor. It depends on Mg(2+) as a cofactor.

The enzyme catalyses (2R)-2,3-dihydroxy-3-methylbutanoate = 3-methyl-2-oxobutanoate + H2O. It catalyses the reaction (2R,3R)-2,3-dihydroxy-3-methylpentanoate = (S)-3-methyl-2-oxopentanoate + H2O. Its pathway is amino-acid biosynthesis; L-isoleucine biosynthesis; L-isoleucine from 2-oxobutanoate: step 3/4. The protein operates within amino-acid biosynthesis; L-valine biosynthesis; L-valine from pyruvate: step 3/4. In terms of biological role, functions in the biosynthesis of branched-chain amino acids. Catalyzes the dehydration of (2R,3R)-2,3-dihydroxy-3-methylpentanoate (2,3-dihydroxy-3-methylvalerate) into 2-oxo-3-methylpentanoate (2-oxo-3-methylvalerate) and of (2R)-2,3-dihydroxy-3-methylbutanoate (2,3-dihydroxyisovalerate) into 2-oxo-3-methylbutanoate (2-oxoisovalerate), the penultimate precursor to L-isoleucine and L-valine, respectively. This Neisseria meningitidis serogroup C / serotype 2a (strain ATCC 700532 / DSM 15464 / FAM18) protein is Dihydroxy-acid dehydratase.